The primary structure comprises 241 residues: Pyridoxine 5'-phosphate synthase (241 aa).

Asn-7 contacts 3-amino-2-oxopropyl phosphate. Residue 9–10 (DH) coordinates 1-deoxy-D-xylulose 5-phosphate. Arg-18 contributes to the 3-amino-2-oxopropyl phosphate binding site. Residue His-43 is the Proton acceptor of the active site. Residues Arg-45 and His-50 each coordinate 1-deoxy-D-xylulose 5-phosphate. Glu-70 (proton acceptor) is an active-site residue. 1-deoxy-D-xylulose 5-phosphate is bound at residue Thr-100. The active-site Proton donor is the His-191. Residues Gly-192 and 213-214 (GH) contribute to the 3-amino-2-oxopropyl phosphate site.

The protein belongs to the PNP synthase family. Homooctamer; tetramer of dimers.

The protein localises to the cytoplasm. It carries out the reaction 3-amino-2-oxopropyl phosphate + 1-deoxy-D-xylulose 5-phosphate = pyridoxine 5'-phosphate + phosphate + 2 H2O + H(+). It participates in cofactor biosynthesis; pyridoxine 5'-phosphate biosynthesis; pyridoxine 5'-phosphate from D-erythrose 4-phosphate: step 5/5. Its function is as follows. Catalyzes the complicated ring closure reaction between the two acyclic compounds 1-deoxy-D-xylulose-5-phosphate (DXP) and 3-amino-2-oxopropyl phosphate (1-amino-acetone-3-phosphate or AAP) to form pyridoxine 5'-phosphate (PNP) and inorganic phosphate. In Nostoc punctiforme (strain ATCC 29133 / PCC 73102), this protein is Pyridoxine 5'-phosphate synthase.